The chain runs to 265 residues: Apolipoprotein A-I (265 aa).

The first 16 residues, 1–16, serve as a signal peptide directing secretion; the sequence is MKAAVLIWLFLMGSQA. Repeat copies occupy residues 66–87 and 88–109. Residues 66–265 form a 10 X approximate tandem repeats region; that stretch reads LKLLDNWDSL…EEYTKKLSSQ (200 aa). Methionine sulfoxide is present on Met108. Residues 110–120 form a 3; half-length repeat; that stretch reads KDLEEVKAQVQ. 5 consecutive repeat copies span residues 121-142, 143-164, 165-186, 187-208, and 209-230. The residue at position 134 (Met134) is a Methionine sulfoxide. The stretch at 231–241 is one 9; half-length repeat; sequence PALDDLRQGLL. Residues 242–265 form repeat 10; it reads PVLESFKVSFLSALEEYTKKLSSQ.

Belongs to the apolipoprotein A1/A4/E family. In terms of assembly, homodimer. Interacts with APOA1BP and CLU. Component of a sperm activating protein complex (SPAP), consisting of APOA1, an immunoglobulin heavy chain, an immunoglobulin light chain and albumin. Interacts with NDRG1. Interacts with SCGB3A2. Interacts with NAXE and YJEFN3. Glycosylated. In terms of processing, palmitoylated. Post-translationally, phosphorylation sites are present in the extracellular medium.

The protein resides in the secreted. Its function is as follows. Participates in the reverse transport of cholesterol from tissues to the liver for excretion by promoting cholesterol efflux from tissues and by acting as a cofactor for the lecithin cholesterol acyltransferase (LCAT). As part of the SPAP complex, activates spermatozoa motility. This Aotus nancymaae (Ma's night monkey) protein is Apolipoprotein A-I (APOA1).